We begin with the raw amino-acid sequence, 424 residues long: UPF0597 protein Sputw3181_2955 (424 aa).

This sequence belongs to the UPF0597 family.

This Shewanella sp. (strain W3-18-1) protein is UPF0597 protein Sputw3181_2955.